Reading from the N-terminus, the 447-residue chain is Probable glycine dehydrogenase (decarboxylating) subunit 1 (447 aa).

Belongs to the GcvP family. N-terminal subunit subfamily. As to quaternary structure, the glycine cleavage system is composed of four proteins: P, T, L and H. In this organism, the P 'protein' is a heterodimer of two subunits.

The enzyme catalyses N(6)-[(R)-lipoyl]-L-lysyl-[glycine-cleavage complex H protein] + glycine + H(+) = N(6)-[(R)-S(8)-aminomethyldihydrolipoyl]-L-lysyl-[glycine-cleavage complex H protein] + CO2. In terms of biological role, the glycine cleavage system catalyzes the degradation of glycine. The P protein binds the alpha-amino group of glycine through its pyridoxal phosphate cofactor; CO(2) is released and the remaining methylamine moiety is then transferred to the lipoamide cofactor of the H protein. The chain is Probable glycine dehydrogenase (decarboxylating) subunit 1 from Bacillus cytotoxicus (strain DSM 22905 / CIP 110041 / 391-98 / NVH 391-98).